A 141-amino-acid polypeptide reads, in one-letter code: Large ribosomal subunit protein uL11 (141 aa).

Belongs to the universal ribosomal protein uL11 family. As to quaternary structure, part of the ribosomal stalk of the 50S ribosomal subunit. Interacts with L10 and the large rRNA to form the base of the stalk. L10 forms an elongated spine to which L12 dimers bind in a sequential fashion forming a multimeric L10(L12)X complex. One or more lysine residues are methylated.

Functionally, forms part of the ribosomal stalk which helps the ribosome interact with GTP-bound translation factors. This is Large ribosomal subunit protein uL11 from Synechocystis sp. (strain ATCC 27184 / PCC 6803 / Kazusa).